The following is a 270-amino-acid chain: Methylthioribulose-1-phosphate dehydratase (270 aa).

Substrate is bound at residue cysteine 122. 2 residues coordinate Zn(2+): histidine 140 and histidine 142. Residue glutamate 165 is the Proton donor/acceptor of the active site. Residue histidine 230 coordinates Zn(2+).

Belongs to the aldolase class II family. MtnB subfamily. Zn(2+) is required as a cofactor.

It localises to the cytoplasm. The enzyme catalyses 5-(methylsulfanyl)-D-ribulose 1-phosphate = 5-methylsulfanyl-2,3-dioxopentyl phosphate + H2O. It participates in amino-acid biosynthesis; L-methionine biosynthesis via salvage pathway; L-methionine from S-methyl-5-thio-alpha-D-ribose 1-phosphate: step 2/6. Catalyzes the dehydration of methylthioribulose-1-phosphate (MTRu-1-P) into 2,3-diketo-5-methylthiopentyl-1-phosphate (DK-MTP-1-P). This Candida albicans (strain SC5314 / ATCC MYA-2876) (Yeast) protein is Methylthioribulose-1-phosphate dehydratase.